The chain runs to 261 residues: Kallikrein 1-related peptidase b26 (261 aa).

The first 18 residues, M1 to A18, serve as a signal peptide directing secretion. The propeptide at P19 to R24 is activation peptide. The region spanning V25 to M258 is the Peptidase S1 domain. 5 disulfides stabilise this stretch: C31–C173, C50–C66, C152–C219, C184–C198, and C209–C234. The Charge relay system role is filled by H65. N102 carries an N-linked (GlcNAc...) asparagine glycan. D120 acts as the Charge relay system in catalysis. S213 serves as the catalytic Charge relay system.

It belongs to the peptidase S1 family. Kallikrein subfamily.

The enzyme catalyses Preferential cleavage of Arg-|-Xaa bonds in small molecule substrates. Highly selective action to release kallidin (lysyl-bradykinin) from kininogen involves hydrolysis of Met-|-Xaa or Leu-|-Xaa.. In terms of biological role, glandular kallikreins cleave Met-Lys and Arg-Ser bonds in kininogen to release Lys-bradykinin. Prorenin-converting enzyme cleaves mouse REN-2 prorenin at a dibasic site to yield mature renin. This Mus musculus (Mouse) protein is Kallikrein 1-related peptidase b26 (Klk1b26).